The sequence spans 958 residues: Glycine dehydrogenase (decarboxylating) (958 aa).

At Lys707 the chain carries N6-(pyridoxal phosphate)lysine.

It belongs to the GcvP family. The glycine cleavage system is composed of four proteins: P, T, L and H. Pyridoxal 5'-phosphate is required as a cofactor.

It catalyses the reaction N(6)-[(R)-lipoyl]-L-lysyl-[glycine-cleavage complex H protein] + glycine + H(+) = N(6)-[(R)-S(8)-aminomethyldihydrolipoyl]-L-lysyl-[glycine-cleavage complex H protein] + CO2. Its function is as follows. The glycine cleavage system catalyzes the degradation of glycine. The P protein binds the alpha-amino group of glycine through its pyridoxal phosphate cofactor; CO(2) is released and the remaining methylamine moiety is then transferred to the lipoamide cofactor of the H protein. This Stutzerimonas stutzeri (strain A1501) (Pseudomonas stutzeri) protein is Glycine dehydrogenase (decarboxylating).